The sequence spans 212 residues: Large ribosomal subunit protein bL25 (212 aa).

Positions 1 to 25 (MSQSTIHKIAVKKRTETGKNENNRL) are disordered. Over residues 13-24 (KRTETGKNENNR) the composition is skewed to basic and acidic residues.

It belongs to the bacterial ribosomal protein bL25 family. CTC subfamily. Part of the 50S ribosomal subunit; part of the 5S rRNA/L5/L18/L25 subcomplex. Contacts the 5S rRNA. Binds to the 5S rRNA independently of L5 and L18.

Its function is as follows. This is one of the proteins that binds to the 5S RNA in the ribosome where it forms part of the central protuberance. This chain is Large ribosomal subunit protein bL25, found in Leptospira borgpetersenii serovar Hardjo-bovis (strain L550).